Here is a 217-residue protein sequence, read N- to C-terminus: ATP phosphoribosyltransferase (217 aa).

This sequence belongs to the ATP phosphoribosyltransferase family. Short subfamily. In terms of assembly, heteromultimer composed of HisG and HisZ subunits.

The protein resides in the cytoplasm. The enzyme catalyses 1-(5-phospho-beta-D-ribosyl)-ATP + diphosphate = 5-phospho-alpha-D-ribose 1-diphosphate + ATP. The protein operates within amino-acid biosynthesis; L-histidine biosynthesis; L-histidine from 5-phospho-alpha-D-ribose 1-diphosphate: step 1/9. Its function is as follows. Catalyzes the condensation of ATP and 5-phosphoribose 1-diphosphate to form N'-(5'-phosphoribosyl)-ATP (PR-ATP). Has a crucial role in the pathway because the rate of histidine biosynthesis seems to be controlled primarily by regulation of HisG enzymatic activity. The protein is ATP phosphoribosyltransferase of Burkholderia vietnamiensis (strain G4 / LMG 22486) (Burkholderia cepacia (strain R1808)).